The following is an 88-amino-acid chain: Small ribosomal subunit protein bS20 (88 aa).

This sequence belongs to the bacterial ribosomal protein bS20 family.

Functionally, binds directly to 16S ribosomal RNA. This Aromatoleum aromaticum (strain DSM 19018 / LMG 30748 / EbN1) (Azoarcus sp. (strain EbN1)) protein is Small ribosomal subunit protein bS20.